We begin with the raw amino-acid sequence, 660 residues long: Integrator complex subunit 9 homolog (660 aa).

This sequence belongs to the metallo-beta-lactamase superfamily. RNA-metabolizing metallo-beta-lactamase-like family. INTS9 subfamily. In terms of assembly, component of the Integrator complex. The core complex associates with protein phosphatase 2A subunits, to form the Integrator-PP2A (INTAC) complex.

The protein resides in the nucleus. The protein localises to the cytoplasm. Functionally, component of the integrator complex, a multiprotein complex that terminates RNA polymerase II (Pol II) transcription in the promoter-proximal region of genes. The integrator complex provides a quality checkpoint during transcription elongation by driving premature transcription termination of transcripts that are unfavorably configured for transcriptional elongation: the complex terminates transcription by (1) catalyzing dephosphorylation of the C-terminal domain (CTD) of Pol II subunit polr2a, (2) degrading the exiting nascent RNA transcript via endonuclease activity and (3) promoting the release of Pol II from bound DNA. The integrator complex is also involved in terminating the synthesis of non-coding Pol II transcripts, such as enhancer RNAs (eRNAs), small nuclear RNAs (snRNAs), telomerase RNAs and long non-coding RNAs (lncRNAs). The protein is Integrator complex subunit 9 homolog (ints9) of Nematostella vectensis (Starlet sea anemone).